The following is a 622-amino-acid chain: Ferredoxin-fold anticodon-binding domain-containing protein 1 homolog (622 aa).

The 94-residue stretch at 529–622 folds into the FDX-ACB domain; sequence LYPPCYVHDV…IQRQLHVSPR (94 aa).

The polypeptide is Ferredoxin-fold anticodon-binding domain-containing protein 1 homolog (Fdxacb1) (Mus musculus (Mouse)).